A 597-amino-acid polypeptide reads, in one-letter code: Cysteine/serine-rich nuclear protein 3 (597 aa).

Disordered regions lie at residues 22–64 and 348–407; these read EDVD…TPSS and CQGD…GFVE. Residues 42 to 52 are compositionally biased toward low complexity; the sequence is SSESADSGDSV. The span at 53–64 shows a compositional bias: polar residues; the sequence is NPSTSNHFTPSS. The segment covering 348 to 359 has biased composition (acidic residues); that stretch reads CQGDEEEEEEDG. Residues 361–376 show a composition bias toward polar residues; the sequence is SFCSGATDSSTQSLAP. Positions 378 to 401 are enriched in acidic residues; that stretch reads ESDEEEEEEEEEEEEEEEDDDDDK.

This sequence belongs to the AXUD1 family. In terms of tissue distribution, detected only in the brain of 15 dpc, 18 dpc, newborn and P6 mice (at protein level).

It is found in the nucleus. Functionally, binds to the consensus sequence 5'-AGAGTG-3' and has transcriptional activator activity. Plays a role in apoptosis. The polypeptide is Cysteine/serine-rich nuclear protein 3 (Csrnp3) (Mus musculus (Mouse)).